The sequence spans 89 residues: Myrmicitoxin(1)-Pm2a (89 aa).

The signal sequence occupies residues 1 to 22 (MEIPKLLYIAVIAIGLSGSLTC). The propeptide occupies 23–61 (ATPLANPWGDPEAEANPEAKATAEATAEAIAEALAEPEP). Asparagine 88 is modified (asparagine amide).

Belongs to the formicidae venom clade 1 family. Expressed by the venom gland.

The protein resides in the secreted. Its function is as follows. Toxin that potently modulates mammalian voltage-gated sodium (Nav) channels, reducing the voltage threshold for activation and inhibiting channel inactivation. Shows activity on hNav1.6/SCN8A (EC(50)=176 nM), mNav1.7/SCN9A (EC(50)=102 nM) and hNav1.7 (EC(50)=154 nM). In vivo, causes spontaneous, gradual and long-lasting nocifensive behaviors by intraplantar injection in mice, as well as pronounced swelling of the injected paw. Does not have effect on insects (blowflies). This Pogonomyrmex maricopa (Maricopa harvester ant) protein is Myrmicitoxin(1)-Pm2a.